Reading from the N-terminus, the 164-residue chain is Phosphopantetheine adenylyltransferase (164 aa).

Thr10 is a substrate binding site. Residues 10 to 11 and His18 each bind ATP; that span reads TF. Lys44, Leu76, and Arg90 together coordinate substrate. ATP-binding positions include 91 to 93, Glu101, and 126 to 132; these read GLR and YAFISSS.

This sequence belongs to the bacterial CoaD family. As to quaternary structure, homohexamer. It depends on Mg(2+) as a cofactor.

It is found in the cytoplasm. It catalyses the reaction (R)-4'-phosphopantetheine + ATP + H(+) = 3'-dephospho-CoA + diphosphate. It participates in cofactor biosynthesis; coenzyme A biosynthesis; CoA from (R)-pantothenate: step 4/5. Reversibly transfers an adenylyl group from ATP to 4'-phosphopantetheine, yielding dephospho-CoA (dPCoA) and pyrophosphate. This is Phosphopantetheine adenylyltransferase from Halorhodospira halophila (strain DSM 244 / SL1) (Ectothiorhodospira halophila (strain DSM 244 / SL1)).